A 314-amino-acid chain; its full sequence is Homeobox protein DBX1-A (314 aa).

Positions 175–234 (GMLRRAVFSDVQRKALEKMFQKQKYISKPDRKKLAAKLGLKDSQVKIWFQNRRMKWRNSK) form a DNA-binding region, homeobox. Disordered stretches follow at residues 234–279 (KERE…CAPS) and 292–314 (STDS…ITVS). The span at 258–267 (DLSDVGKKSS) shows a compositional bias: basic and acidic residues. Over residues 305–314 (SESEDEITVS) the composition is skewed to acidic residues.

It belongs to the H2.0 homeobox family.

It localises to the nucleus. This chain is Homeobox protein DBX1-A (dbx1a), found in Danio rerio (Zebrafish).